The sequence spans 49 residues: Small, acid-soluble spore protein O (49 aa).

Positions M1–Q49 are disordered. Polar residues predominate over residues H8–G20.

The protein belongs to the SspO family.

Its subcellular location is the spore core. The chain is Small, acid-soluble spore protein O from Bacillus cereus (strain AH187).